The chain runs to 85 residues: SPbeta prophage-derived uncharacterized protein YoqG (85 aa).

The protein is SPbeta prophage-derived uncharacterized protein YoqG (yoqG) of Bacillus subtilis (strain 168).